The chain runs to 171 residues: Large ribosomal subunit protein bL17 (171 aa).

Residues 130-171 (PGYKKSKGKKATKAKGKKAKATPAAEAAAAATTEAAPAEEKK) form a disordered region. A compositionally biased stretch (basic residues) spans 133 to 149 (KKSKGKKATKAKGKKAK). Residues 150-165 (ATPAAEAAAAATTEAA) are compositionally biased toward low complexity.

The protein belongs to the bacterial ribosomal protein bL17 family. Part of the 50S ribosomal subunit. Contacts protein L32.

This is Large ribosomal subunit protein bL17 from Opitutus terrae (strain DSM 11246 / JCM 15787 / PB90-1).